The following is a 597-amino-acid chain: Elongation factor 4 (597 aa).

Positions 2–184 constitute a tr-type G domain; sequence QHIRNFSIIA…AIVARVPSPE (183 aa). GTP contacts are provided by residues 14 to 19 and 131 to 134; these read DHGKST and NKMD.

This sequence belongs to the TRAFAC class translation factor GTPase superfamily. Classic translation factor GTPase family. LepA subfamily.

The protein resides in the cell inner membrane. It carries out the reaction GTP + H2O = GDP + phosphate + H(+). Functionally, required for accurate and efficient protein synthesis under certain stress conditions. May act as a fidelity factor of the translation reaction, by catalyzing a one-codon backward translocation of tRNAs on improperly translocated ribosomes. Back-translocation proceeds from a post-translocation (POST) complex to a pre-translocation (PRE) complex, thus giving elongation factor G a second chance to translocate the tRNAs correctly. Binds to ribosomes in a GTP-dependent manner. The protein is Elongation factor 4 of Bordetella avium (strain 197N).